The primary structure comprises 324 residues: Germination protease (324 aa).

Residues 1–10 (MIIVLGIRTD) constitute a propeptide that is removed on maturation.

Belongs to the peptidase A25 family. As to quaternary structure, homotetramer. In terms of processing, autoproteolytically processed. The inactive tetrameric zymogen termed p46 autoprocesses to a smaller form termed p41, which is active only during spore germination.

The enzyme catalyses Endopeptidase action with P4 Glu or Asp, P1 preferably Glu &gt; Asp, P1' hydrophobic and P2' Ala.. In terms of biological role, initiates the rapid degradation of small, acid-soluble proteins during spore germination. In Caldanaerobacter subterraneus subsp. tengcongensis (strain DSM 15242 / JCM 11007 / NBRC 100824 / MB4) (Thermoanaerobacter tengcongensis), this protein is Germination protease.